Consider the following 101-residue polypeptide: NADH-ubiquinone oxidoreductase chain 5 (101 aa).

The next 3 membrane-spanning stretches (helical) occupy residues 12 to 32 (IALF…SGVI), 48 to 68 (FLFI…FICF), and 79 to 99 (LVIY…LFII).

This sequence belongs to the complex I subunit 5 family.

It is found in the mitochondrion inner membrane. It carries out the reaction a ubiquinone + NADH + 5 H(+)(in) = a ubiquinol + NAD(+) + 4 H(+)(out). Functionally, core subunit of the mitochondrial membrane respiratory chain NADH dehydrogenase (Complex I) that is believed to belong to the minimal assembly required for catalysis. Complex I functions in the transfer of electrons from NADH to the respiratory chain. The immediate electron acceptor for the enzyme is believed to be ubiquinone. The polypeptide is NADH-ubiquinone oxidoreductase chain 5 (ND5) (Leishmania tarentolae (Sauroleishmania tarentolae)).